A 737-amino-acid polypeptide reads, in one-letter code: Autophagy-related protein 22 (737 aa).

Residues 115-154 (RMSPANAGDNSDSYPYGDDTDGDSSSGLPPPRYPGDDTRP) form a disordered region. A compositionally biased stretch (low complexity) spans 125-141 (SDSYPYGDDTDGDSSSG). 4 helical membrane passes run 166–186 (YAFA…PILL), 232–252 (SFAM…VVSI), 264–284 (KLLL…IFIS), and 289–309 (LIGA…FVLL). Positions 327 to 353 (GDYGSPGYATTEEGDDEDDEYQEDSTR) are disordered. Acidic residues predominate over residues 338–349 (EEGDDEDDEYQE). A glycan (N-linked (GlcNAc...) asparagine) is linked at Asn354. The chain crosses the membrane as a helical span at residues 395 to 415 (GIGIGYIAGLFLQCVAIAILI). N-linked (GlcNAc...) asparagine glycosylation is present at Asn419. The next 7 membrane-spanning stretches (helical) occupy residues 426–446 (IVLC…AMWL), 487–507 (LVDI…IATT), 524–544 (WALG…AFSW), 559–579 (ILAC…GYLP), 593–613 (WEMY…SGYC), 632–652 (LYAI…GAII), and 661–681 (AFWF…FINV).

It belongs to the ATG22 family.

Its subcellular location is the vacuole membrane. Its function is as follows. Vacuolar effluxer which mediate the efflux of amino acids resulting from autophagic degradation. The release of autophagic amino acids allows the maintenance of protein synthesis and viability during nitrogen starvation. This Neurospora crassa (strain ATCC 24698 / 74-OR23-1A / CBS 708.71 / DSM 1257 / FGSC 987) protein is Autophagy-related protein 22 (apg-11).